A 128-amino-acid polypeptide reads, in one-letter code: Fluoride-specific ion channel FluC (128 aa).

4 helical membrane-spanning segments follow: residues 3–23 (FTTIFYIGFGGALGAILRSFT), 34–54 (LSFPLGTLSVNIIGGFFIGFL), 65–85 (INLKSFLVTGFLGGLTTFSTF), and 102–122 (FLNIASNLLLSLLFCYFGFWI). Residues glycine 77 and threonine 80 each coordinate Na(+).

It belongs to the fluoride channel Fluc/FEX (TC 1.A.43) family.

Its subcellular location is the cell inner membrane. It catalyses the reaction fluoride(in) = fluoride(out). Na(+) is not transported, but it plays an essential structural role and its presence is essential for fluoride channel function. In terms of biological role, fluoride-specific ion channel. Important for reducing fluoride concentration in the cell, thus reducing its toxicity. This is Fluoride-specific ion channel FluC from Campylobacter fetus subsp. fetus (strain 82-40).